A 151-amino-acid polypeptide reads, in one-letter code: Acidic phospholipase A2 2 (151 aa).

Residues 1 to 27 (MYPAHLLVLLAVCVSLLGAASIPARPL) form the signal peptide. Intrachain disulfides connect C38-C104, C54-C151, C56-C72, C71-C132, C78-C125, C88-C118, and C111-C123. Ca(2+)-binding residues include Y55, G57, and G59. The active site involves H75. D76 lines the Ca(2+) pocket. Residue D126 is part of the active site.

It belongs to the phospholipase A2 family. Group I subfamily. D49 sub-subfamily. Ca(2+) is required as a cofactor. Expressed by the venom gland.

The protein localises to the secreted. The catalysed reaction is a 1,2-diacyl-sn-glycero-3-phosphocholine + H2O = a 1-acyl-sn-glycero-3-phosphocholine + a fatty acid + H(+). Its function is as follows. PLA2 catalyzes the calcium-dependent hydrolysis of the 2-acyl groups in 3-sn-phosphoglycerides. The protein is Acidic phospholipase A2 2 of Tropidechis carinatus (Australian rough-scaled snake).